The primary structure comprises 158 residues: EOLA-like protein (158 aa).

One can recognise an ASCH domain in the interval 6–92; sequence LSFRQPYAGF…IAGLVDIGET (87 aa).

It belongs to the EOLA family.

The protein is EOLA-like protein of Pongo abelii (Sumatran orangutan).